A 130-amino-acid polypeptide reads, in one-letter code: Small ribosomal subunit protein uS9 (130 aa).

Belongs to the universal ribosomal protein uS9 family.

The polypeptide is Small ribosomal subunit protein uS9 (Burkholderia vietnamiensis (strain G4 / LMG 22486) (Burkholderia cepacia (strain R1808))).